The following is a 743-amino-acid chain: Probable TonB-dependent siderophore receptor PiuA (743 aa).

An N-terminal signal peptide occupies residues 1–28 (MSLIRTRKKIVSSAIASSLSMIATTAMA). Residues 61-167 (PLLDTPKSVS…VGGSINMISK (107 aa)) enclose the TBDR plug domain. One can recognise a TBDR beta-barrel domain in the interval 172–743 (GDFLEGSVAA…SAVLAVNFKY (572 aa)). Disulfide bonds link C408–C416 and C627–C632.

This sequence belongs to the TonB-dependent receptor family.

It localises to the cell outer membrane. In terms of biological role, probably involved in the initial step of iron uptake by binding iron chelating siderophores, thereby allowing extraction of iron from the environment. May bind the siderophore, ferric enterobactin, with micromolar affinity. The protein is Probable TonB-dependent siderophore receptor PiuA of Acinetobacter baumannii (strain ATCC 19606 / DSM 30007 / JCM 6841 / CCUG 19606 / CIP 70.34 / NBRC 109757 / NCIMB 12457 / NCTC 12156 / 81).